Here is a 219-residue protein sequence, read N- to C-terminus: Ras-related protein Rab-3B (219 aa).

Position 2 is an N-acetylalanine (Ala2). GTP-binding residues include Ser31, Ser32, Val33, Gly34, Lys35, Thr36, Ser37, Pro49, and Ser53. Ser32 is a binding site for GDP. GDP contacts are provided by Gly34, Lys35, Thr36, and Ser37. Residue Thr36 participates in Mg(2+) binding. Residues Asp45–Asp58 carry the Switch 1 motif. 2 residues coordinate Mg(2+): Thr54 and Asp77. Positions Thr78–Met96 match the Switch 2 motif. A GTP-binding site is contributed by Gly80. At Thr86 the chain carries Phosphothreonine; by LRRK2. Asn135, Lys136, and Asp138 together coordinate GTP. Asn135, Lys136, Asp138, Met139, Ala166, and Lys167 together coordinate GDP. GTP is bound by residues Ala166 and Lys167. Phosphoserine is present on residues Ser188 and Ser190. S-geranylgeranyl cysteine attachment occurs at residues Cys217 and Cys219. Cys219 carries the cysteine methyl ester modification.

Belongs to the small GTPase superfamily. Rab family. As to quaternary structure, interacts with RIMS1, RIMS2, RPH3A and RPH3AL. The GTP-bound form interacts with GAS8/DRC4 (via coiled-coil domains). The GTP-bound form interacts with REP15. Interacts with GDI2, CHM and CHML; phosphorylation at Thr-86 disrupts these interactions. Interacts with MADD (via uDENN domain); the GTP-bound form is preferred for interaction. Mg(2+) is required as a cofactor. Post-translationally, phosphorylation of Thr-86 in the switch II region by LRRK2 prevents the association of RAB regulatory proteins, including CHM, CHML and RAB GDP dissociation inhibitor GDI2.

The protein localises to the cell membrane. The protein resides in the golgi apparatus. It carries out the reaction GTP + H2O = GDP + phosphate + H(+). With respect to regulation, regulated by guanine nucleotide exchange factors (GEFs) which promote the exchange of bound GDP for free GTP. Regulated by GTPase activating proteins (GAPs) which increase the GTP hydrolysis activity. Inhibited by GDP dissociation inhibitors (GDIs) which prevent Rab-GDP dissociation. In terms of biological role, the small GTPases Rab are key regulators of intracellular membrane trafficking, from the formation of transport vesicles to their fusion with membranes. Rabs cycle between an inactive GDP-bound form and an active GTP-bound form that is able to recruit to membranes different sets of downstream effectors directly responsible for vesicle formation, movement, tethering and fusion. This is Ras-related protein Rab-3B from Homo sapiens (Human).